The sequence spans 375 residues: Alcohol dehydrogenase 1A (375 aa).

Serine 2 is subject to N-acetylserine. Serine 23 is modified (phosphoserine). Cysteine 47 lines the Zn(2+) pocket. 48 to 52 contributes to the NAD(+) binding site; it reads GTDDH. Residues histidine 68, cysteine 98, cysteine 101, cysteine 104, cysteine 112, and cysteine 175 each contribute to the Zn(2+) site. Residues 200–205, aspartate 224, lysine 229, isoleucine 270, 293–295, 318–320, and arginine 370 contribute to the NAD(+) site; these read GLGGVG, VGV, and AIL.

It belongs to the zinc-containing alcohol dehydrogenase family. Dimer of identical or heterodimer of closely related subunits alpha, beta, or gamma that are encoded by genes ADH1A, ADH1B, and ADH1C, respectively. The cofactor is Zn(2+).

Its subcellular location is the cytoplasm. The catalysed reaction is a primary alcohol + NAD(+) = an aldehyde + NADH + H(+). The enzyme catalyses a secondary alcohol + NAD(+) = a ketone + NADH + H(+). It carries out the reaction butan-1-ol + NAD(+) = butanal + NADH + H(+). It catalyses the reaction 1-propanol + NAD(+) = propanal + NADH + H(+). Its function is as follows. Alcohol dehydrogenase. Oxidizes primary as well as secondary alcohols. Ethanol is a very poor substrate. The sequence is that of Alcohol dehydrogenase 1A (ADH1A) from Homo sapiens (Human).